Here is a 222-residue protein sequence, read N- to C-terminus: Ribulose-phosphate 3-epimerase (222 aa).

Ser-7 is a substrate binding site. Residues His-32, Asp-34, and His-65 each coordinate a divalent metal cation. The active-site Proton acceptor is Asp-34. Residues His-65, 141–144 (GFSG), 174–176 (DGG), and 196–197 (GS) each bind substrate. Asp-174 is an a divalent metal cation binding site. Asp-174 acts as the Proton donor in catalysis.

Belongs to the ribulose-phosphate 3-epimerase family. A divalent metal cation serves as cofactor.

It catalyses the reaction D-ribulose 5-phosphate = D-xylulose 5-phosphate. The protein operates within carbohydrate degradation. Functionally, catalyzes the reversible epimerization of D-ribulose 5-phosphate to D-xylulose 5-phosphate. This Aquifex aeolicus (strain VF5) protein is Ribulose-phosphate 3-epimerase.